The chain runs to 165 residues: Hydroxyproline-rich systemin A (165 aa).

A signal peptide spans 1 to 18 (MRVLFLIYLILSPFGAEA). Residues 19 to 35 (RTLLENHEGLNVGSGYG) constitute a propeptide that is removed on maturation. 2 disordered regions span residues 33–70 (GYGRGANLPPPSPASSPPSKEVSNSVSPTRTDEKTSEN) and 142–165 (YWNRKPLSPPSPKPADGQRPLHSY). 5 positions are modified to 4-hydroxyproline: Pro42, Pro43, Pro45, Pro49, and Pro50. O-linked (Ara...) hydroxyproline glycosylation is found at Pro42, Pro43, Pro45, Pro49, and Pro50. Residues 54–143 (VSNSVSPTRT…FDSKSDERYW (90 aa)) constitute a propeptide that is removed on maturation. Pro150, Pro151, and Pro153 each carry 4-hydroxyproline. Residues Pro150, Pro151, and Pro153 are each glycosylated (O-linked (Ara...) hydroxyproline). The propeptide occupies 162-165 (LHSY).

In terms of processing, O-glycosylated; contains pentose side chains. In terms of tissue distribution, expressed in leaves.

The protein localises to the secreted. Activates a lipid-based signal transduction pathway in which linolenic acid is converted to jasmonic acid, a potent activator of defense gene transcription, including proteinase inhibitors. In Nicotiana tabacum (Common tobacco), this protein is Hydroxyproline-rich systemin A.